The chain runs to 81 residues: Extracellular matrix regulatory protein B (81 aa).

Its function is as follows. Regulates the biosynthesis of the extracellular matrix and the biofilm formation. May act as an enhancer of biofilm gene expression. Acts in parallel to the pathway that governs SinR derepression. This is Extracellular matrix regulatory protein B from Bacillus subtilis (strain 168).